An 87-amino-acid polypeptide reads, in one-letter code: Translation initiation factor IF-1 2 (87 aa).

In terms of domain architecture, S1-like spans Met-1–Lys-72.

It belongs to the IF-1 family. Component of the 30S ribosomal translation pre-initiation complex which assembles on the 30S ribosome in the order IF-2 and IF-3, IF-1 and N-formylmethionyl-tRNA(fMet); mRNA recruitment can occur at any time during PIC assembly.

The protein localises to the cytoplasm. One of the essential components for the initiation of protein synthesis. Stabilizes the binding of IF-2 and IF-3 on the 30S subunit to which N-formylmethionyl-tRNA(fMet) subsequently binds. Helps modulate mRNA selection, yielding the 30S pre-initiation complex (PIC). Upon addition of the 50S ribosomal subunit IF-1, IF-2 and IF-3 are released leaving the mature 70S translation initiation complex. In Burkholderia vietnamiensis (strain G4 / LMG 22486) (Burkholderia cepacia (strain R1808)), this protein is Translation initiation factor IF-1 2.